The sequence spans 620 residues: Two-component response regulator ORR27 (620 aa).

In terms of domain architecture, Response regulatory spans 24-138 (HVLVVDDDAA…AIKFIWKHVL (115 aa)). Residue Asp-76 is modified to 4-aspartylphosphate. 2 disordered regions span residues 171-197 (PPAVQLPAAPAQAGNRDGEAHEEAELS) and 215-257 (VWSS…LEAT). The segment at residues 261-321 (KKVRTRFTWT…HLQKYRSWLE (61 aa)) is a DNA-binding region (myb-like GARP). The span at 431 to 456 (SVSRDAHENGNSQARGSAMSNGTSGT) shows a compositional bias: polar residues. 3 disordered regions span residues 431-457 (SVSRDAHENGNSQARGSAMSNGTSGTR), 501-523 (SDQNPGTSHPTSSSAINNQNSKT), and 596-620 (PPRGLNNEIASHENTNGKNGASSGP). Over residues 603–620 (EIASHENTNGKNGASSGP) the composition is skewed to polar residues.

The protein belongs to the ARR family. Type-B subfamily. Post-translationally, two-component system major event consists of a His-to-Asp phosphorelay between a sensor histidine kinase (HK) and a response regulator (RR). In plants, the His-to-Asp phosphorelay involves an additional intermediate named Histidine-containing phosphotransfer protein (HPt). This multistep phosphorelay consists of a His-Asp-His-Asp sequential transfer of a phosphate group between first a His and an Asp of the HK protein, followed by the transfer to a conserved His of the HPt protein and finally the transfer to an Asp in the receiver domain of the RR protein.

It is found in the nucleus. Its function is as follows. Transcriptional activator that binds specific DNA sequence. Functions as a response regulator involved in His-to-Asp phosphorelay signal transduction system. Phosphorylation of the Asp residue in the receiver domain activates the ability of the protein to promote the transcription of target genes. May directly activate some type-A response regulators in response to cytokinins. In Oryza sativa subsp. japonica (Rice), this protein is Two-component response regulator ORR27.